Consider the following 287-residue polypeptide: Ribosomal RNA small subunit methyltransferase A (287 aa).

Positions 28, 30, 55, 77, 103, and 123 each coordinate S-adenosyl-L-methionine.

This sequence belongs to the class I-like SAM-binding methyltransferase superfamily. rRNA adenine N(6)-methyltransferase family. RsmA subfamily.

The protein resides in the cytoplasm. It carries out the reaction adenosine(1518)/adenosine(1519) in 16S rRNA + 4 S-adenosyl-L-methionine = N(6)-dimethyladenosine(1518)/N(6)-dimethyladenosine(1519) in 16S rRNA + 4 S-adenosyl-L-homocysteine + 4 H(+). In terms of biological role, specifically dimethylates two adjacent adenosines (A1518 and A1519) in the loop of a conserved hairpin near the 3'-end of 16S rRNA in the 30S particle. May play a critical role in biogenesis of 30S subunits. In Rhodopseudomonas palustris (strain HaA2), this protein is Ribosomal RNA small subunit methyltransferase A.